The chain runs to 374 residues: Phosphatidylglycerol--prolipoprotein diacylglyceryl transferase (374 aa).

The next 4 helical transmembrane spans lie at 33 to 53 (ICFI…IALF), 155 to 175 (LCWF…VFFY), 195 to 215 (LASH…TSYI), and 222 to 242 (LSFL…AVFI). Arg243 is a binding site for a 1,2-diacyl-sn-glycero-3-phospho-(1'-sn-glycerol). A run of 3 helical transmembrane segments spans residues 279–299 (PVQL…FTLW), 306–326 (LAAG…RFLL), and 341–361 (ILQM…CLVW).

It belongs to the Lgt family.

It is found in the cell inner membrane. The enzyme catalyses L-cysteinyl-[prolipoprotein] + a 1,2-diacyl-sn-glycero-3-phospho-(1'-sn-glycerol) = an S-1,2-diacyl-sn-glyceryl-L-cysteinyl-[prolipoprotein] + sn-glycerol 1-phosphate + H(+). The protein operates within protein modification; lipoprotein biosynthesis (diacylglyceryl transfer). Catalyzes the transfer of the diacylglyceryl group from phosphatidylglycerol to the sulfhydryl group of the N-terminal cysteine of a prolipoprotein, the first step in the formation of mature lipoproteins. This chain is Phosphatidylglycerol--prolipoprotein diacylglyceryl transferase, found in Protochlamydia amoebophila (strain UWE25).